The following is a 167-amino-acid chain: Signal peptidase complex subunit 3A (167 aa).

Residues 1-11 lie on the Cytoplasmic side of the membrane; sequence MHTFGYRANAL. The chain crosses the membrane as a helical; Signal-anchor for type II membrane protein span at residues 12-32; it reads LTFAVTALAFICAIASFSDKF. Over 33–167 the chain is Lumenal; that stretch reads SNQNPSAEIQ…PGYSLPDAYR (135 aa). N136 carries an N-linked (GlcNAc...) asparagine glycan.

This sequence belongs to the SPCS3 family. As to quaternary structure, component of the signal peptidase complex (SPC) composed of a catalytic subunit SEC11 and three accessory subunits SPCS1, SPCS2 and SPCS3. The complex induces a local thinning of the ER membrane which is used to measure the length of the signal peptide (SP) h-region of protein substrates. This ensures the selectivity of the complex towards h-regions shorter than 18-20 amino acids.

Its subcellular location is the endoplasmic reticulum membrane. In terms of biological role, essential component of the signal peptidase complex (SPC) which catalyzes the cleavage of N-terminal signal sequences from nascent proteins as they are translocated into the lumen of the endoplasmic reticulum. Essential for the SPC catalytic activity, possibly by stabilizing and positioning the active center of the complex close to the lumenal surface. The sequence is that of Signal peptidase complex subunit 3A from Arabidopsis thaliana (Mouse-ear cress).